The primary structure comprises 330 residues: Phenylalanine--tRNA ligase alpha subunit (330 aa).

Glutamate 257 serves as a coordination point for Mg(2+).

The protein belongs to the class-II aminoacyl-tRNA synthetase family. Phe-tRNA synthetase alpha subunit type 1 subfamily. As to quaternary structure, tetramer of two alpha and two beta subunits. Requires Mg(2+) as cofactor.

It is found in the cytoplasm. The catalysed reaction is tRNA(Phe) + L-phenylalanine + ATP = L-phenylalanyl-tRNA(Phe) + AMP + diphosphate + H(+). This Nostoc sp. (strain PCC 7120 / SAG 25.82 / UTEX 2576) protein is Phenylalanine--tRNA ligase alpha subunit.